Reading from the N-terminus, the 203-residue chain is Imidazole glycerol phosphate synthase subunit HisH (203 aa).

The Glutamine amidotransferase type-1 domain occupies 1–203; that stretch reads MIGIIDYGMG…KNFGEMIKCL (203 aa). C79 (nucleophile) is an active-site residue. Residues H181 and E183 contribute to the active site.

As to quaternary structure, heterodimer of HisH and HisF.

It is found in the cytoplasm. It catalyses the reaction 5-[(5-phospho-1-deoxy-D-ribulos-1-ylimino)methylamino]-1-(5-phospho-beta-D-ribosyl)imidazole-4-carboxamide + L-glutamine = D-erythro-1-(imidazol-4-yl)glycerol 3-phosphate + 5-amino-1-(5-phospho-beta-D-ribosyl)imidazole-4-carboxamide + L-glutamate + H(+). The catalysed reaction is L-glutamine + H2O = L-glutamate + NH4(+). The protein operates within amino-acid biosynthesis; L-histidine biosynthesis; L-histidine from 5-phospho-alpha-D-ribose 1-diphosphate: step 5/9. IGPS catalyzes the conversion of PRFAR and glutamine to IGP, AICAR and glutamate. The HisH subunit catalyzes the hydrolysis of glutamine to glutamate and ammonia as part of the synthesis of IGP and AICAR. The resulting ammonia molecule is channeled to the active site of HisF. The polypeptide is Imidazole glycerol phosphate synthase subunit HisH (Caldanaerobacter subterraneus subsp. tengcongensis (strain DSM 15242 / JCM 11007 / NBRC 100824 / MB4) (Thermoanaerobacter tengcongensis)).